The following is a 181-amino-acid chain: Cytochrome b6-f complex iron-sulfur subunit (181 aa).

Residues 1-35 form a disordered region; it reads MAQTGNFKSPARMSSLGQGAAPASAGAVTGGKPRE. 2 consecutive transmembrane segments (helical) span residues 53–73 and 114–134; these read VGGVGAVVAVSTLYPVVRYIV and GGSLTAVSAICTHLGCLVHWD. The Rieske domain maps to 85–178; sequence LAVGPASDVP…VKIEDGKIVV (94 aa). Positions 124, 126, 142, and 145 each coordinate [2Fe-2S] cluster. A disulfide bridge links Cys-129 with Cys-144.

The protein belongs to the Rieske iron-sulfur protein family. It depends on [2Fe-2S] cluster as a cofactor.

Its subcellular location is the cell inner membrane. The enzyme catalyses 2 oxidized [plastocyanin] + a plastoquinol + 2 H(+)(in) = 2 reduced [plastocyanin] + a plastoquinone + 4 H(+)(out). Its function is as follows. Component of the green S-bacteria bc-complex which consists of the Rieske protein and cytochrome b subunit and which appears to lack a cytochrome c1-equivalent. This complex has a comparatively low redox potential. The chain is Cytochrome b6-f complex iron-sulfur subunit (petC) from Chlorobaculum tepidum (strain ATCC 49652 / DSM 12025 / NBRC 103806 / TLS) (Chlorobium tepidum).